We begin with the raw amino-acid sequence, 90 residues long: MSSSITAPEGIINPPIDELLEATDSKYSLVIYAAKRARQINAYYSQLGEGLLEYVGPLVDTHVHEKPLSIALREINAGLLTSEAIEGPAQ.

The protein belongs to the RNA polymerase subunit omega family. The RNAP catalytic core consists of 2 alpha, 1 beta, 1 beta' and 1 omega subunit. When a sigma factor is associated with the core the holoenzyme is formed, which can initiate transcription.

It carries out the reaction RNA(n) + a ribonucleoside 5'-triphosphate = RNA(n+1) + diphosphate. In terms of biological role, promotes RNA polymerase assembly. Latches the N- and C-terminal regions of the beta' subunit thereby facilitating its interaction with the beta and alpha subunits. Required for kasugamycin production and aerial mycelium formation in S.kasugaensis and responsible for pleiotropy. In Streptomyces kasugaensis, this protein is DNA-directed RNA polymerase subunit omega (rpoZ).